A 355-amino-acid polypeptide reads, in one-letter code: Fructose-1,6-bisphosphatase class 1 (355 aa).

Mg(2+) contacts are provided by Glu90, Asp109, Leu111, and Asp112. Substrate contacts are provided by residues 112 to 115 (DGSS), Asn204, and 256 to 258 (YLY). Position 276 (Glu276) interacts with Mg(2+).

The protein belongs to the FBPase class 1 family. In terms of assembly, homotetramer. Requires Mg(2+) as cofactor.

Its subcellular location is the cytoplasm. It carries out the reaction beta-D-fructose 1,6-bisphosphate + H2O = beta-D-fructose 6-phosphate + phosphate. The protein operates within carbohydrate biosynthesis; gluconeogenesis. The chain is Fructose-1,6-bisphosphatase class 1 from Acidiphilium cryptum (strain JF-5).